Reading from the N-terminus, the 431-residue chain is Glutamate-1-semialdehyde 2,1-aminomutase (431 aa).

An N6-(pyridoxal phosphate)lysine modification is found at Lys265.

The protein belongs to the class-III pyridoxal-phosphate-dependent aminotransferase family. HemL subfamily. As to quaternary structure, homodimer. Pyridoxal 5'-phosphate serves as cofactor.

It localises to the cytoplasm. The enzyme catalyses (S)-4-amino-5-oxopentanoate = 5-aminolevulinate. It functions in the pathway porphyrin-containing compound metabolism; protoporphyrin-IX biosynthesis; 5-aminolevulinate from L-glutamyl-tRNA(Glu): step 2/2. This Vibrio parahaemolyticus serotype O3:K6 (strain RIMD 2210633) protein is Glutamate-1-semialdehyde 2,1-aminomutase.